The primary structure comprises 453 residues: Retroviral integration site protein Fli-1 homolog (453 aa).

One can recognise a PNT domain in the interval 111–197; that stretch reads PPPPNMTTNE…SHLNYLRDSS (87 aa). Over residues 201–214 the composition is skewed to polar residues; that stretch reads GYNTQAHTDQSSRL. Residues 201–273 form a disordered region; that stretch reads GYNTQAHTDQ…YQILGPTSSR (73 aa). Basic and acidic residues predominate over residues 215–226; sequence TAKEDPSYEAVR. 2 stretches are compositionally biased toward polar residues: residues 230 to 239 and 246 to 273; these read WGNSMSSPVT and GTQN…TSSR. The ETS DNA-binding region spans 282–362; it reads IQLWQFLLEL…HGKRYAYKFD (81 aa).

The protein belongs to the ETS family.

The protein resides in the nucleus. This chain is Retroviral integration site protein Fli-1 homolog (fli1), found in Xenopus laevis (African clawed frog).